Here is a 400-residue protein sequence, read N- to C-terminus: Putative F-box protein At1g30920 (400 aa).

The F-box domain maps to 4–49 (EENTDSIPIDLILDILSRLPSKSIARCRCVSKLWESMIRQSYFTEL).

The polypeptide is Putative F-box protein At1g30920 (Arabidopsis thaliana (Mouse-ear cress)).